Here is a 361-residue protein sequence, read N- to C-terminus: Protein RecA (361 aa).

68 to 75 (GPESSGKT) contacts ATP. The segment at 342–361 (PEGAKENISAKDDVAVDTKE) is disordered. Residues 344–361 (GAKENISAKDDVAVDTKE) show a composition bias toward basic and acidic residues.

This sequence belongs to the RecA family.

Its subcellular location is the cytoplasm. Its function is as follows. Can catalyze the hydrolysis of ATP in the presence of single-stranded DNA, the ATP-dependent uptake of single-stranded DNA by duplex DNA, and the ATP-dependent hybridization of homologous single-stranded DNAs. It interacts with LexA causing its activation and leading to its autocatalytic cleavage. The protein is Protein RecA of Clostridium beijerinckii (strain ATCC 51743 / NCIMB 8052) (Clostridium acetobutylicum).